A 329-amino-acid polypeptide reads, in one-letter code: Vacuolar protein sorting-associated protein 26B-like (329 aa).

This sequence belongs to the VPS26 family.

The protein resides in the cytoplasm. The protein localises to the membrane. Probable component of the retromer complex, a complex required to retrieve lysosomal enzyme receptors (IGF2R and M6PR) from endosomes to the trans-Golgi network. The sequence is that of Vacuolar protein sorting-associated protein 26B-like (vps26bl) from Danio rerio (Zebrafish).